We begin with the raw amino-acid sequence, 263 residues long: Chymotrypsinogen B2 (263 aa).

Residues 1–18 (MAFLWLLSCWALLGTTFG) form the signal peptide. Disulfide bonds link cysteine 19/cysteine 140, cysteine 60/cysteine 76, cysteine 154/cysteine 219, cysteine 186/cysteine 200, and cysteine 209/cysteine 238. The Peptidase S1 domain occupies 34–261 (IVNGEDAVPG…LIPWVQKILA (228 aa)). Active-site charge relay system residues include histidine 75 and aspartate 120. Serine 213 functions as the Charge relay system in the catalytic mechanism.

The protein belongs to the peptidase S1 family.

The protein localises to the secreted. The protein resides in the extracellular space. It carries out the reaction Preferential cleavage: Tyr-|-Xaa, Trp-|-Xaa, Phe-|-Xaa, Leu-|-Xaa.. This chain is Chymotrypsinogen B2 (CTRB2), found in Homo sapiens (Human).